The following is a 329-amino-acid chain: 4-hydroxy-3-methylbut-2-enyl diphosphate reductase (329 aa).

[4Fe-4S] cluster is bound at residue C27. H56 and H89 together coordinate (2E)-4-hydroxy-3-methylbut-2-enyl diphosphate. Dimethylallyl diphosphate contacts are provided by H56 and H89. Isopentenyl diphosphate contacts are provided by H56 and H89. C111 contacts [4Fe-4S] cluster. H139 provides a ligand contact to (2E)-4-hydroxy-3-methylbut-2-enyl diphosphate. Dimethylallyl diphosphate is bound at residue H139. Residue H139 coordinates isopentenyl diphosphate. Residue E141 is the Proton donor of the active site. Residue T179 coordinates (2E)-4-hydroxy-3-methylbut-2-enyl diphosphate. C209 serves as a coordination point for [4Fe-4S] cluster. Residues S237, S238, N239, and S281 each contribute to the (2E)-4-hydroxy-3-methylbut-2-enyl diphosphate site. Positions 237, 238, 239, and 281 each coordinate dimethylallyl diphosphate. 4 residues coordinate isopentenyl diphosphate: S237, S238, N239, and S281.

The protein belongs to the IspH family. It depends on [4Fe-4S] cluster as a cofactor.

The enzyme catalyses isopentenyl diphosphate + 2 oxidized [2Fe-2S]-[ferredoxin] + H2O = (2E)-4-hydroxy-3-methylbut-2-enyl diphosphate + 2 reduced [2Fe-2S]-[ferredoxin] + 2 H(+). It carries out the reaction dimethylallyl diphosphate + 2 oxidized [2Fe-2S]-[ferredoxin] + H2O = (2E)-4-hydroxy-3-methylbut-2-enyl diphosphate + 2 reduced [2Fe-2S]-[ferredoxin] + 2 H(+). It participates in isoprenoid biosynthesis; dimethylallyl diphosphate biosynthesis; dimethylallyl diphosphate from (2E)-4-hydroxy-3-methylbutenyl diphosphate: step 1/1. The protein operates within isoprenoid biosynthesis; isopentenyl diphosphate biosynthesis via DXP pathway; isopentenyl diphosphate from 1-deoxy-D-xylulose 5-phosphate: step 6/6. In terms of biological role, catalyzes the conversion of 1-hydroxy-2-methyl-2-(E)-butenyl 4-diphosphate (HMBPP) into a mixture of isopentenyl diphosphate (IPP) and dimethylallyl diphosphate (DMAPP). Acts in the terminal step of the DOXP/MEP pathway for isoprenoid precursor biosynthesis. This chain is 4-hydroxy-3-methylbut-2-enyl diphosphate reductase, found in Methylibium petroleiphilum (strain ATCC BAA-1232 / LMG 22953 / PM1).